The primary structure comprises 348 residues: Phosphate acyltransferase (348 aa).

Belongs to the PlsX family. As to quaternary structure, homodimer. Probably interacts with PlsY.

It localises to the cytoplasm. It carries out the reaction a fatty acyl-[ACP] + phosphate = an acyl phosphate + holo-[ACP]. The protein operates within lipid metabolism; phospholipid metabolism. Its function is as follows. Catalyzes the reversible formation of acyl-phosphate (acyl-PO(4)) from acyl-[acyl-carrier-protein] (acyl-ACP). This enzyme utilizes acyl-ACP as fatty acyl donor, but not acyl-CoA. The chain is Phosphate acyltransferase from Rhizobium etli (strain ATCC 51251 / DSM 11541 / JCM 21823 / NBRC 15573 / CFN 42).